The following is a 435-amino-acid chain: Hydrogenobyrinate a,c-diamide synthase (435 aa).

Residues 247-435 form the GATase cobBQ-type domain; the sequence is RIALARDAAF…TGSFFHLIAG (189 aa). Cysteine 329 acts as the Nucleophile in catalysis.

The protein belongs to the CobB/CbiA family. The cofactor is Mg(2+).

It catalyses the reaction hydrogenobyrinate + 2 L-glutamine + 2 ATP + 2 H2O = hydrogenobyrinate a,c-diamide + 2 L-glutamate + 2 ADP + 2 phosphate + 2 H(+). The protein operates within cofactor biosynthesis; adenosylcobalamin biosynthesis; cob(II)yrinate a,c-diamide from precorrin-2 (aerobic route): step 9/10. In terms of biological role, catalyzes the ATP-dependent amidation of the two carboxylate groups at positions a and c of hydrogenobyrinate, using either L-glutamine or ammonia as the nitrogen source. This is Hydrogenobyrinate a,c-diamide synthase from Rhodobacter capsulatus (strain ATCC BAA-309 / NBRC 16581 / SB1003).